The sequence spans 825 residues: Probable inorganic carbon transporter subunit DabA (825 aa).

4 residues coordinate Zn(2+): Cys-334, Asp-336, His-521, and Cys-536.

Belongs to the inorganic carbon transporter (TC 9.A.2) DabA family. Forms a complex with DabB. It depends on Zn(2+) as a cofactor.

Its subcellular location is the cell inner membrane. Its function is as follows. Part of an energy-coupled inorganic carbon pump. The polypeptide is Probable inorganic carbon transporter subunit DabA (Acidithiobacillus ferrooxidans (strain ATCC 53993 / BNL-5-31) (Leptospirillum ferrooxidans (ATCC 53993))).